The following is a 699-amino-acid chain: Cysteine--tRNA ligase (699 aa).

The segment at 1 to 226 (MTTITEKRLT…SEQQRLIHNP (226 aa)) is unknown. Residue cysteine 254 participates in Zn(2+) binding. The 'HIGH' region motif lies at 256-266 (MTVYDYCHLGH). The Zn(2+) site is built by cysteine 435, histidine 460, and glutamate 464. Positions 508–512 (KMSKS) match the 'KMSKS' region motif. Residue lysine 511 participates in ATP binding.

The protein belongs to the class-I aminoacyl-tRNA synthetase family. As to quaternary structure, monomer. Requires Zn(2+) as cofactor.

Its subcellular location is the cytoplasm. The enzyme catalyses tRNA(Cys) + L-cysteine + ATP = L-cysteinyl-tRNA(Cys) + AMP + diphosphate. This is Cysteine--tRNA ligase (cysS) from Neisseria meningitidis serogroup A / serotype 4A (strain DSM 15465 / Z2491).